The sequence spans 477 residues: Aspartyl/glutamyl-tRNA(Asn/Gln) amidotransferase subunit B (477 aa).

The protein belongs to the GatB/GatE family. GatB subfamily. In terms of assembly, heterotrimer of A, B and C subunits.

The enzyme catalyses L-glutamyl-tRNA(Gln) + L-glutamine + ATP + H2O = L-glutaminyl-tRNA(Gln) + L-glutamate + ADP + phosphate + H(+). It carries out the reaction L-aspartyl-tRNA(Asn) + L-glutamine + ATP + H2O = L-asparaginyl-tRNA(Asn) + L-glutamate + ADP + phosphate + 2 H(+). Functionally, allows the formation of correctly charged Asn-tRNA(Asn) or Gln-tRNA(Gln) through the transamidation of misacylated Asp-tRNA(Asn) or Glu-tRNA(Gln) in organisms which lack either or both of asparaginyl-tRNA or glutaminyl-tRNA synthetases. The reaction takes place in the presence of glutamine and ATP through an activated phospho-Asp-tRNA(Asn) or phospho-Glu-tRNA(Gln). In Streptococcus gordonii (strain Challis / ATCC 35105 / BCRC 15272 / CH1 / DL1 / V288), this protein is Aspartyl/glutamyl-tRNA(Asn/Gln) amidotransferase subunit B.